Reading from the N-terminus, the 395-residue chain is MTLPVNPADNLAALIRCPSVTPAEGGALTALEKMLKLMGFSANRPVFSDDNTPDIENLYARKSGNGPHLMFAGHTDVVPPGDEKDWKHPPFAAAIEDGVMYGRGAVDMKGGIACFVAAVARHIEKHGNIKGSISFLITGDEEGPAVNGTVKLLEWAKQRGESWDASIVGEPTNPNALGDMIKIGRRGSLSGTITVHGVQGHAAYPHLAENPVRGIVTLVDSLLYPAFDEGTANFQASNLEVTTIDVGNKATNVIPNKATASFNIRFNDTWTAESLQAEIISRLERAARDNRLRQGRETPIKYELTWRERPSHVFLTHDEKLIGTLTASVEAVTGKRPELSTSGGTSDARFIKDYCPVVEFGLTGQTMHMVDERVALADLEGLTQIYERFIADFFG.

Residue His-74 participates in Zn(2+) binding. Asp-76 is an active-site residue. Position 107 (Asp-107) interacts with Zn(2+). The active-site Proton acceptor is Glu-141. Residues Glu-142, Glu-170, and His-368 each coordinate Zn(2+).

It belongs to the peptidase M20A family. DapE subfamily. In terms of assembly, homodimer. Requires Zn(2+) as cofactor. The cofactor is Co(2+).

The catalysed reaction is N-succinyl-(2S,6S)-2,6-diaminopimelate + H2O = (2S,6S)-2,6-diaminopimelate + succinate. It functions in the pathway amino-acid biosynthesis; L-lysine biosynthesis via DAP pathway; LL-2,6-diaminopimelate from (S)-tetrahydrodipicolinate (succinylase route): step 3/3. Functionally, catalyzes the hydrolysis of N-succinyl-L,L-diaminopimelic acid (SDAP), forming succinate and LL-2,6-diaminopimelate (DAP), an intermediate involved in the bacterial biosynthesis of lysine and meso-diaminopimelic acid, an essential component of bacterial cell walls. In Brucella canis (strain ATCC 23365 / NCTC 10854 / RM-666), this protein is Succinyl-diaminopimelate desuccinylase.